Here is a 215-residue protein sequence, read N- to C-terminus: N-(5'-phosphoribosyl)anthranilate isomerase (215 aa).

It belongs to the TrpF family.

The enzyme catalyses N-(5-phospho-beta-D-ribosyl)anthranilate = 1-(2-carboxyphenylamino)-1-deoxy-D-ribulose 5-phosphate. It functions in the pathway amino-acid biosynthesis; L-tryptophan biosynthesis; L-tryptophan from chorismate: step 3/5. In Rhizobium meliloti (strain 1021) (Ensifer meliloti), this protein is N-(5'-phosphoribosyl)anthranilate isomerase.